Reading from the N-terminus, the 1465-residue chain is Protein clueless (1465 aa).

The interval 1–87 (MALEIDAKNA…SNGHSENGDA (87 aa)) is disordered. Low complexity predominate over residues 30–51 (HNNNNNAPAAGEKNLVNGSSAA). Residues 52 to 61 (TKKKGKKNRN) are compositionally biased toward basic residues. S273 bears the Phosphoserine mark. One can recognise a Clu domain in the interval 427–669 (RAEDAFSSKL…RTFPPDVNFL (243 aa)). Basic and acidic residues predominate over residues 742–767 (AEKQEEPNEEQPEKTEEQPAEKEESK). Disordered stretches follow at residues 742 to 776 (AEKQEEPNEEQPEKTEEQPAEKEESKPTPSETKSA) and 962 to 1021 (VSSD…SNSD). Basic residues predominate over residues 970–986 (KQPRNNSGKHNKHKAAK). 2 stretches are compositionally biased toward low complexity: residues 987 to 1003 (ASKPQAAAAQNGNATAA) and 1010 to 1020 (ATTSGATSSNS). TPR repeat units lie at residues 1114–1147 (AYNFYTTGQAKIQQGMLKEGYELISEALNLLNNV), 1240–1273 (ALIDSNISLILHALGEYELSLRFIEHALKLNLKY), and 1275–1308 (GNKAMHVAVSYHLMARIQSCMGDFRSALNNEKET). A disordered region spans residues 1428 to 1465 (NNNDNASETEQPKDEASAAGTPTQLTNGSEESTATVSS). Residues 1447-1465 (GTPTQLTNGSEESTATVSS) are compositionally biased toward polar residues.

It belongs to the CLU family.

The protein resides in the cytoplasm. Its function is as follows. mRNA-binding protein involved in proper cytoplasmic distribution of mitochondria. This is Protein clueless from Drosophila virilis (Fruit fly).